The following is a 480-amino-acid chain: Glycerol-3-phosphate transporter (480 aa).

Residues 1–36 (MFGPFKPAPHIAELPAEKIDSTYKRLRWQVFAGIFF) lie on the Cytoplasmic side of the membrane. Residues 37 to 57 (GYAAYYFVRANFDLAQPGLIQ) form a helical membrane-spanning segment. The Periplasmic segment spans residues 58–64 (AGLYSKA). Residues 65–85 (ELGVIGSAAGLAYGLSKFVMA) traverse the membrane as a helical segment. The Cytoplasmic portion of the chain corresponds to 86–94 (GMSDRSNPR). A helical transmembrane segment spans residues 95-113 (VFLPFGLLLSGLCMTLMGL). Residues 114–121 (FPWATSGI) lie on the Periplasmic side of the membrane. A helical membrane pass occupies residues 122 to 142 (AIMWVMIFLNGWFQGMGWPPC). Topologically, residues 143–161 (GRTMVHWWSKSERGTIVSI) are cytoplasmic. A helical transmembrane segment spans residues 162–181 (WNTAHNIGGMVPGAMVLLAS). At 182 to 201 (AIFFSTHGIEAQAKDVWQQS) the chain is on the periplasmic side. The helical transmembrane segment at 202-219 (LYFPGIAAMIFAIPVYFV) threads the bilayer. The Cytoplasmic portion of the chain corresponds to 220-274 (MRDTPQSCGLPSIEKWRNDYPDDYNEKTYENDLTAKEIFVTYVLKNKLLWYIAIA). The helical transmembrane segment at 275–295 (NVFVYLIRYGVLKWSPVYLSE) threads the bilayer. The Periplasmic portion of the chain corresponds to 296-300 (VKHFN). A helical membrane pass occupies residues 301 to 321 (IKGTAWAYTIYELAAVPGTLL). Residues 322-334 (CGWVSDKVFKGKR) are Cytoplasmic-facing. A helical transmembrane segment spans residues 335-354 (GLTGFIFMILTTAAVVAYWM). Over 355–359 (NPATP) the chain is Periplasmic. Residues 360-396 (EAELANYSAWYENPYQLTDFVLMTLIGFLIYGPVMLI) traverse the membrane as a helical segment. The Cytoplasmic portion of the chain corresponds to 397 to 415 (GLHALELAPKKAAGTAAGF). A helical membrane pass occupies residues 416–437 (TGLFGYLGGTVSASAVIGWAAQ). Residues 438 to 442 (HYGWD) are Periplasmic-facing. The helical transmembrane segment at 443 to 463 (GGFYVMIGGGVLAVLLLLIVM) threads the bilayer. Topologically, residues 464–479 (VEEGKHKAKLGDTYGT) are cytoplasmic.

Belongs to the major facilitator superfamily. Organophosphate:Pi antiporter (OPA) (TC 2.A.1.4) family.

It is found in the cell inner membrane. In terms of biological role, responsible for glycerol-3-phosphate uptake. This Haemophilus influenzae (strain ATCC 51907 / DSM 11121 / KW20 / Rd) protein is Glycerol-3-phosphate transporter (glpT).